A 636-amino-acid chain; its full sequence is p-hydroxybenzoate-m-hydroxylase A (636 aa).

FAD-binding positions include 10 to 39 (DIVI…HIDN), 241 to 243 (RLY), Tyr-289, and Asp-310. A helical membrane pass occupies residues 11 to 28 (IVIVGAGPVGIVLSLCMS).

This sequence belongs to the PheA/TfdB FAD monooxygenase family. FAD serves as cofactor.

Its subcellular location is the membrane. The enzyme catalyses 4-hydroxybenzoate + NADH + O2 + H(+) = 3,4-dihydroxybenzoate + NAD(+) + H2O. It carries out the reaction 4-hydroxybenzoate + NADPH + O2 + H(+) = 3,4-dihydroxybenzoate + NADP(+) + H2O. FAD-dependent monooxygenase; part of the benzoic acid degradation pathway also known as the protocatechuic acid pathway. Benzoic acid debradation begins with the conversion of benzoic acid into 4-hydroxybenzoic acid through hydroxylation by the benzoate-4-monooxygenase bphA, and its partner NADPH-cytochrome P450 reductase cprA which act as a mediator in electron donation from NADPH. 4-Hydroxybenzoic acid is then converted into 3,4-dihydroxybenzoic acid (also called protocatechuic acid) by the p-hydroxybenzoate-m-hydroxylase phhA. Protocatechuic acid is converted into 3-carboxy-cis,cis-muconic acid by the intradiol ring-cleavage dioxygenase prcA, which is further metabolized through the 3-oxoadipate pathway to finally enter the tricarboxylic acid cycle (TCA). In Aspergillus niger (strain ATCC MYA-4892 / CBS 513.88 / FGSC A1513), this protein is p-hydroxybenzoate-m-hydroxylase A.